The sequence spans 775 residues: Kazrin (775 aa).

The interval 38–66 (AELSGGGGPGPGPGAAASASAAGDSAATN) is disordered. Low complexity predominate over residues 51-64 (GAAASASAAGDSAA). A coiled-coil region spans residues 74–256 (AQVLLREEVS…LATLTKDVPK (183 aa)). The interaction with PPL stretch occupies residues 174-333 (RDFIRNYEQH…SAAEGDRSST (160 aa)). The segment at 290–427 (QQTLYHSHPP…QSLSLSEGEE (138 aa)) is disordered. Phosphoserine occurs at positions 352, 367, and 387. Residues 411-422 (SQCSPTRQSLSL) are compositionally biased toward polar residues. 3 SAM domains span residues 446–511 (WKAG…YRDA), 524–588 (DHHW…LYQV), and 612–679 (WTNQ…SAVF). Disordered regions lie at residues 688–715 (REAE…SSGL) and 729–762 (RGFS…LEQC). Residues 732–742 (SSKDPDFHDDY) are compositionally biased toward basic and acidic residues.

This sequence belongs to the kazrin family. Isoform 2, isoform 3 and isoform 4 interact with PPL N-terminus. Isoform 2, isoform 3 and isoform 4 are expressed in several cell lines including keratinocytes and bladder and epidermoid carcinoma (at protein level). Isoform 2, isoform 3 and isoform 4 are expressed in hair follicle and interfollicular epidermis (at protein level).

The protein localises to the cytoplasm. It localises to the cytoskeleton. The protein resides in the cell junction. It is found in the desmosome. Its subcellular location is the nucleus. Functionally, component of the cornified envelope of keratinocytes. May be involved in the interplay between adherens junctions and desmosomes. The function in the nucleus is not known. This chain is Kazrin, found in Homo sapiens (Human).